The sequence spans 987 residues: UvrABC system protein A (987 aa).

33–40 (GLSGSGKS) contributes to the ATP binding site. Residues 255 to 282 (CPVCDYSLPELEPRLFSFNAPVGACPSC) form a C4-type zinc finger. ABC transporter domains are found at residues 312 to 589 (WDRR…PRSL) and 609 to 938 (PNPK…QFLA). ATP is bound at residue 642–649 (GVSGSGKS). The C4-type zinc-finger motif lies at 741–767 (CEACQGDGMIKVEMHFLPDVYVPCDVC). The tract at residues 948–987 (ETRPAAMANKPDARPPRKVKPEKVAKAAKSATKKTAKKAS) is disordered. The span at 958 to 972 (PDARPPRKVKPEKVA) shows a compositional bias: basic and acidic residues. A compositionally biased stretch (basic residues) spans 978-987 (ATKKTAKKAS).

The protein belongs to the ABC transporter superfamily. UvrA family. Forms a heterotetramer with UvrB during the search for lesions.

The protein resides in the cytoplasm. The UvrABC repair system catalyzes the recognition and processing of DNA lesions. UvrA is an ATPase and a DNA-binding protein. A damage recognition complex composed of 2 UvrA and 2 UvrB subunits scans DNA for abnormalities. When the presence of a lesion has been verified by UvrB, the UvrA molecules dissociate. The protein is UvrABC system protein A of Xanthomonas axonopodis pv. citri (strain 306).